The primary structure comprises 282 residues: UPF0759 protein YunF (282 aa).

Belongs to the UPF0759 family.

This Bacillus subtilis (strain 168) protein is UPF0759 protein YunF (yunF).